The chain runs to 507 residues: RNA-splicing ligase RtcB homolog (507 aa).

Mn(2+) is bound by residues Asp121, Cys124, His229, His261, and His355. 228–232 (NHYAE) contributes to the GMP binding site. GMP contacts are provided by residues 355-356 (HN), 404-407 (GGTM), Ser411, 430-433 (HGAG), and Lys506. His430 acts as the GMP-histidine intermediate in catalysis.

The protein belongs to the RtcB family. Catalytic component of the tRNA-splicing ligase complex. The cofactor is Mn(2+).

The catalysed reaction is a 3'-end 3'-phospho-ribonucleotide-RNA + a 5'-end dephospho-ribonucleoside-RNA + GTP = a ribonucleotidyl-ribonucleotide-RNA + GMP + diphosphate. The enzyme catalyses a 3'-end 2',3'-cyclophospho-ribonucleotide-RNA + a 5'-end dephospho-ribonucleoside-RNA + GTP + H2O = a ribonucleotidyl-ribonucleotide-RNA + GMP + diphosphate + H(+). In terms of biological role, catalytic subunit of the tRNA-splicing ligase complex that acts by directly joining spliced tRNA halves to mature-sized tRNAs by incorporating the precursor-derived splice junction phosphate into the mature tRNA as a canonical 3',5'-phosphodiester. May act as an RNA ligase with broad substrate specificity, and may function toward other RNAs. This chain is RNA-splicing ligase RtcB homolog, found in Micromonas pusilla (strain CCMP1545) (Picoplanktonic green alga).